The sequence spans 95 residues: U8-barytoxin-Tl1a (95 aa).

A signal peptide spans 1–21 (MKTLVLVAVLGLASLYLLSYA). Residues 22-50 (SEVQQLSVAEEEFGALIDAFGGLLETEER) constitute a propeptide that is removed on maturation. Intrachain disulfides connect Cys-57/Cys-71, Cys-64/Cys-76, and Cys-70/Cys-86.

Belongs to the neurotoxin 10 (Hwtx-1) family. 26 (ICK-1) subfamily. In terms of tissue distribution, expressed by the venom gland.

The protein resides in the secreted. In terms of biological role, ion channel inhibitor. The chain is U8-barytoxin-Tl1a from Trittame loki (Brush-footed trapdoor spider).